The following is a 370-amino-acid chain: UDP-N-acetylglucosamine--N-acetylmuramyl-(pentapeptide) pyrophosphoryl-undecaprenol N-acetylglucosamine transferase (370 aa).

UDP-N-acetyl-alpha-D-glucosamine contacts are provided by residues 15-17, Asn129, Arg170, Ser199, Ile254, and Gln299; that span reads TGG.

This sequence belongs to the glycosyltransferase 28 family. MurG subfamily.

The protein resides in the cell inner membrane. It catalyses the reaction di-trans,octa-cis-undecaprenyl diphospho-N-acetyl-alpha-D-muramoyl-L-alanyl-D-glutamyl-meso-2,6-diaminopimeloyl-D-alanyl-D-alanine + UDP-N-acetyl-alpha-D-glucosamine = di-trans,octa-cis-undecaprenyl diphospho-[N-acetyl-alpha-D-glucosaminyl-(1-&gt;4)]-N-acetyl-alpha-D-muramoyl-L-alanyl-D-glutamyl-meso-2,6-diaminopimeloyl-D-alanyl-D-alanine + UDP + H(+). Its pathway is cell wall biogenesis; peptidoglycan biosynthesis. Its function is as follows. Cell wall formation. Catalyzes the transfer of a GlcNAc subunit on undecaprenyl-pyrophosphoryl-MurNAc-pentapeptide (lipid intermediate I) to form undecaprenyl-pyrophosphoryl-MurNAc-(pentapeptide)GlcNAc (lipid intermediate II). This chain is UDP-N-acetylglucosamine--N-acetylmuramyl-(pentapeptide) pyrophosphoryl-undecaprenol N-acetylglucosamine transferase, found in Magnetococcus marinus (strain ATCC BAA-1437 / JCM 17883 / MC-1).